Here is a 230-residue protein sequence, read N- to C-terminus: Ion-translocating oxidoreductase complex subunit E (230 aa).

6 helical membrane passes run 18-38 (ALVQ…ATNA), 39-59 (LGLG…VSAL), 63-83 (TPAE…VSAV), 86-106 (LINA…PLIV), 125-145 (WLSA…MFVL), and 182-202 (PFLL…MLAV).

Belongs to the NqrDE/RnfAE family. As to quaternary structure, the complex is composed of six subunits: RsxA, RsxB, RsxC, RsxD, RsxE and RsxG.

It localises to the cell inner membrane. In terms of biological role, part of a membrane-bound complex that couples electron transfer with translocation of ions across the membrane. Required to maintain the reduced state of SoxR. The sequence is that of Ion-translocating oxidoreductase complex subunit E from Salmonella agona (strain SL483).